The following is a 379-amino-acid chain: Structure-specific endonuclease subunit EME2 (379 aa).

The interval 1–55 (MARVGPGRAGVSCQGRGRGRGGSGQRRPPTWEISDSDAEDSAGSEAAARARDPAG) is disordered. Residues 50 to 266 (ARDPAGERRA…YPLKQYRESQ (217 aa)) form a nuclease-like domain; forms the post-nick DNA binding interface and is involved in DNA recognition and bending region. Positions 288–379 (GLQAAWRRQI…NPDLLLDLGS (92 aa)) are helix-hairpin-helix (2HhH); forms the pre-nick DNA binding interface and is involved in DNA recognition and bending.

Belongs to the EME1/MMS4 family. As to quaternary structure, part of the heterodimeric MUS81-EME2 complex; the complex forms specifically during the DNA replication phase of the cell cycle.

Its subcellular location is the nucleus. Its function is as follows. Non-catalytic subunit of the structure-specific, heterodimeric DNA endonuclease MUS81-EME2 which is involved in the maintenance of genome stability. In the complex, EME2 is required for DNA cleavage, participating in DNA recognition and bending. MUS81-EME2 cleaves 3'-flaps and nicked Holliday junctions, and exhibit limited endonuclease activity with 5' flaps and nicked double-stranded DNAs. MUS81-EME2 which is active during the replication of DNA is more specifically involved in replication fork processing. Replication forks frequently encounter obstacles to their passage, including DNA base lesions, DNA interstrand cross-links, difficult-to-replicate sequences, transcription bubbles, or tightly bound proteins. One mechanism for the restart of a stalled replication fork involves nucleolytic cleavage mediated by the MUS81-EME2 endonuclease. By acting upon the stalled fork, MUS81-EME2 generates a DNA double-strand break (DSB) that can be repaired by homologous recombination, leading to the restoration of an active fork. MUS81-EME2 could also function in telomere maintenance. This Homo sapiens (Human) protein is Structure-specific endonuclease subunit EME2.